The following is a 289-amino-acid chain: Elongation factor Ts (289 aa).

Residues T80–V83 are involved in Mg(2+) ion dislocation from EF-Tu.

It belongs to the EF-Ts family.

Its subcellular location is the cytoplasm. Its function is as follows. Associates with the EF-Tu.GDP complex and induces the exchange of GDP to GTP. It remains bound to the aminoacyl-tRNA.EF-Tu.GTP complex up to the GTP hydrolysis stage on the ribosome. The sequence is that of Elongation factor Ts from Francisella tularensis subsp. holarctica (strain LVS).